Here is a 155-residue protein sequence, read N- to C-terminus: Protein PtsT (155 aa).

In Geobacillus stearothermophilus (Bacillus stearothermophilus), this protein is Protein PtsT (ptsT).